The primary structure comprises 355 residues: Uroporphyrinogen decarboxylase (355 aa).

Substrate-binding positions include 38 to 42 (RQAGR), D87, Y162, S217, and H331.

The protein belongs to the uroporphyrinogen decarboxylase family. In terms of assembly, homodimer.

The protein localises to the cytoplasm. It catalyses the reaction uroporphyrinogen III + 4 H(+) = coproporphyrinogen III + 4 CO2. It functions in the pathway porphyrin-containing compound metabolism; protoporphyrin-IX biosynthesis; coproporphyrinogen-III from 5-aminolevulinate: step 4/4. Catalyzes the decarboxylation of four acetate groups of uroporphyrinogen-III to yield coproporphyrinogen-III. The polypeptide is Uroporphyrinogen decarboxylase (Streptomyces coelicolor (strain ATCC BAA-471 / A3(2) / M145)).